We begin with the raw amino-acid sequence, 582 residues long: Sulfite reductase [NADPH] hemoprotein beta-component (582 aa).

A compositionally biased stretch (basic and acidic residues) spans 1 to 12; that stretch reads MDLKVKVDRSRD. The interval 1-26 is disordered; sequence MDLKVKVDRSRDVSQPLDKLGPDETL. [4Fe-4S] cluster contacts are provided by cysteine 447, cysteine 453, cysteine 492, and cysteine 496. Cysteine 496 is a siroheme binding site.

This sequence belongs to the nitrite and sulfite reductase 4Fe-4S domain family. Alpha(8)-beta(8). The alpha component is a flavoprotein, the beta component is a hemoprotein. The cofactor is siroheme. [4Fe-4S] cluster serves as cofactor.

The catalysed reaction is hydrogen sulfide + 3 NADP(+) + 3 H2O = sulfite + 3 NADPH + 4 H(+). The protein operates within sulfur metabolism; hydrogen sulfide biosynthesis; hydrogen sulfide from sulfite (NADPH route): step 1/1. In terms of biological role, component of the sulfite reductase complex that catalyzes the 6-electron reduction of sulfite to sulfide. This is one of several activities required for the biosynthesis of L-cysteine from sulfate. In Afipia carboxidovorans (strain ATCC 49405 / DSM 1227 / KCTC 32145 / OM5) (Oligotropha carboxidovorans), this protein is Sulfite reductase [NADPH] hemoprotein beta-component.